The primary structure comprises 153 residues: Endoribonuclease YbeY (153 aa).

Positions 112, 116, and 122 each coordinate Zn(2+).

The protein belongs to the endoribonuclease YbeY family. Zn(2+) serves as cofactor.

The protein resides in the cytoplasm. In terms of biological role, single strand-specific metallo-endoribonuclease involved in late-stage 70S ribosome quality control and in maturation of the 3' terminus of the 16S rRNA. The polypeptide is Endoribonuclease YbeY (Persephonella marina (strain DSM 14350 / EX-H1)).